A 46-amino-acid chain; its full sequence is MTPMRITVWRKRLQQMRPQRKLLKQTQQRRLLHQLQQRKLLQQTSL.

In terms of biological role, seems to play a role in virus replication. This Solanum tuberosum (Potato) protein is Replication-associated protein.